A 154-amino-acid polypeptide reads, in one-letter code: Deoxyuridine 5'-triphosphate nucleotidohydrolase (154 aa).

Residues 72–74, asparagine 85, 89–91, and methionine 99 contribute to the substrate site; these read RSG and LID.

It belongs to the dUTPase family. The cofactor is Mg(2+).

It carries out the reaction dUTP + H2O = dUMP + diphosphate + H(+). It functions in the pathway pyrimidine metabolism; dUMP biosynthesis; dUMP from dCTP (dUTP route): step 2/2. Functionally, this enzyme is involved in nucleotide metabolism: it produces dUMP, the immediate precursor of thymidine nucleotides and it decreases the intracellular concentration of dUTP so that uracil cannot be incorporated into DNA. The chain is Deoxyuridine 5'-triphosphate nucleotidohydrolase from Psychrobacter sp. (strain PRwf-1).